The primary structure comprises 503 residues: Glycerol kinase (503 aa).

T14 contacts ADP. Positions 14, 15, and 16 each coordinate ATP. T14 serves as a coordination point for sn-glycerol 3-phosphate. R18 contacts ADP. Sn-glycerol 3-phosphate is bound by residues R84, E85, Y136, and D246. Residues R84, E85, Y136, D246, and Q247 each contribute to the glycerol site. T268 and G311 together coordinate ADP. T268, G311, Q315, and G412 together coordinate ATP. G412 and N416 together coordinate ADP.

The protein belongs to the FGGY kinase family. Homotetramer and homodimer (in equilibrium). Heterodimer with EIIA-Glc. Binds 1 zinc ion per glycerol kinase EIIA-Glc dimer. The zinc ion is important for dimerization.

It carries out the reaction glycerol + ATP = sn-glycerol 3-phosphate + ADP + H(+). The protein operates within polyol metabolism; glycerol degradation via glycerol kinase pathway; sn-glycerol 3-phosphate from glycerol: step 1/1. Activity of this regulatory enzyme is affected by several metabolites. Allosterically and non-competitively inhibited by fructose 1,6-bisphosphate (FBP) and unphosphorylated phosphocarrier protein EIIA-Glc (III-Glc), an integral component of the bacterial phosphotransferase (PTS) system. Its function is as follows. Key enzyme in the regulation of glycerol uptake and metabolism. Catalyzes the phosphorylation of glycerol to yield sn-glycerol 3-phosphate. The chain is Glycerol kinase from Klebsiella pneumoniae (strain 342).